A 335-amino-acid polypeptide reads, in one-letter code: Dihydroorotate dehydrogenase (quinone) (335 aa).

Residues 59–63 (AGADK) and threonine 83 each bind FMN. Lysine 63 serves as a coordination point for substrate. Residue 108 to 112 (NRNGF) coordinates substrate. The FMN site is built by asparagine 136 and asparagine 169. Asparagine 169 provides a ligand contact to substrate. Serine 172 serves as the catalytic Nucleophile. A substrate-binding site is contributed by asparagine 174. FMN contacts are provided by lysine 214 and glycine 242. 243–244 (NT) provides a ligand contact to substrate. Residues glycine 265, glycine 294, and 315-316 (YS) contribute to the FMN site.

The protein belongs to the dihydroorotate dehydrogenase family. Type 2 subfamily. Monomer. The cofactor is FMN.

The protein resides in the cell membrane. The enzyme catalyses (S)-dihydroorotate + a quinone = orotate + a quinol. It functions in the pathway pyrimidine metabolism; UMP biosynthesis via de novo pathway; orotate from (S)-dihydroorotate (quinone route): step 1/1. Its function is as follows. Catalyzes the conversion of dihydroorotate to orotate with quinone as electron acceptor. The sequence is that of Dihydroorotate dehydrogenase (quinone) from Glaesserella parasuis serovar 5 (strain SH0165) (Haemophilus parasuis).